A 130-amino-acid chain; its full sequence is 3-hydroxyisobutyrate dehydrogenase, mitochondrial (130 aa).

Residues 1-17 (TPVGFIGLGNMGNPMAK), 25-26 (LP), and Asn30 contribute to the NAD(+) site. Lys43 carries the post-translational modification N6-acetyllysine. Lys47 carries the post-translational modification N6-acetyllysine; alternate. N6-succinyllysine; alternate is present on Lys47. An N6-succinyllysine modification is found at Lys101.

This sequence belongs to the HIBADH-related family. 3-hydroxyisobutyrate dehydrogenase subfamily. As to quaternary structure, homodimer.

The protein resides in the mitochondrion. The enzyme catalyses 3-hydroxy-2-methylpropanoate + NAD(+) = 2-methyl-3-oxopropanoate + NADH + H(+). It participates in amino-acid degradation; L-valine degradation. The chain is 3-hydroxyisobutyrate dehydrogenase, mitochondrial from Mesocricetus auratus (Golden hamster).